The sequence spans 423 residues: Osteomodulin (423 aa).

The signal sequence occupies residues 1–20 (MGFLSPIYVLFFCFGVRVYC). Sulfotyrosine is present on residues Y22, Y25, Y31, Y39, Y51, and Y77. An LRRNT domain is found at 53–91 (VPFYNNILGCAKECFCPTNFPTSMYCDNRKLKTIPIIPM). 11 LRR repeats span residues 92 to 113 (HIQQ…SFIN), 116 to 129 (HLKE…KIKS), 142 to 164 (NLQQ…PKSL), 165 to 184 (ERLL…AMDG), 187 to 207 (NVTM…KEKT), 213 to 233 (KLMQ…GLPS), 234 to 255 (SLMY…YFDK), 258 to 279 (KLHA…IFNL), 281 to 294 (NLIE…KLKQ), 301 to 322 (NLEH…MICP), and 331 to 353 (HLTY…IFFC). N-linked (GlcNAc...) asparagine glycosylation is found at N113 and N121. N187 carries N-linked (GlcNAc...) asparagine glycosylation. 2 N-linked (GlcNAc...) asparagine glycosylation sites follow: N242 and N278. N316 carries N-linked (GlcNAc...) asparagine glycosylation. Cysteines 321 and 353 form a disulfide. Positions 381–406 (RSYQEEEEEDDHDSQDNTLEGQEVSD) are disordered. Sulfotyrosine occurs at positions 413 and 414.

This sequence belongs to the small leucine-rich proteoglycan (SLRP) family. SLRP class II subfamily. Binds the alpha(V)beta(3)-integrin. Post-translationally, glycosylated; contains keratan sulfate. As to expression, bone specific.

Its subcellular location is the secreted. It localises to the extracellular space. The protein resides in the extracellular matrix. Functionally, may be implicated in biomineralization processes. Has a function in binding of osteoblasts via the alpha(V)beta(3)-integrin. This Mus musculus (Mouse) protein is Osteomodulin (Omd).